Consider the following 445-residue polypeptide: C-terminal-binding protein 2 (445 aa).

Position 22 is an asymmetric dimethylarginine (Arg-22). NAD(+) contacts are provided by residues Ser-106, 186 to 191 (IGFGRT), Asp-210, 243 to 249 (CNLNEHN), 270 to 272 (AAR), and Asp-296. The active site involves Arg-272. Glu-301 is an active-site residue. His-321 acts as the Proton donor in catalysis. 321–324 (HTAW) is a binding site for NAD(+). Positions 414-445 (THNLPTVAHPSQAPSPNQPTKHGDNREHPNEQ) are disordered. Phosphoserine is present on Ser-428. The span at 434 to 445 (KHGDNREHPNEQ) shows a compositional bias: basic and acidic residues.

This sequence belongs to the D-isomer specific 2-hydroxyacid dehydrogenase family. In terms of assembly, interacts with the C-terminus of adenovirus E1A protein. Can form homodimers or heterodimers of CTBP1 and CTBP2. Interacts with HIPK2. Interacts with ZNF217, PNN, NRIP1 and WIZ. Interacts with PRDM16; represses white adipose tissue (WAT)-specific genes expression. Interacts with MCRIP1. In terms of tissue distribution, isoform 2 is specifically localized in synaptic ribbon (at protein level).

The protein localises to the nucleus. Its subcellular location is the synapse. Functionally, corepressor targeting diverse transcription regulators. Functions in brown adipose tissue (BAT) differentiation. Isoform 2 probably acts as a scaffold for specialized synapses. In Bos taurus (Bovine), this protein is C-terminal-binding protein 2 (CTBP2).